Here is a 605-residue protein sequence, read N- to C-terminus: Podocalyxin-like protein 2 (605 aa).

Residues 1 to 32 form the signal peptide; that stretch reads MGRLLRAARLPPLLSPLLLLLVGGAFLGACVA. Residues 33-500 lie on the Extracellular side of the membrane; it reads GSDEPGPEGL…ASQVRSDYGT (468 aa). A glycan (O-linked (Xyl...) (chondroitin sulfate) serine) is linked at Ser-79. Residues Tyr-97 and Tyr-118 each carry the sulfotyrosine modification. The segment at 129–134 is O-glycosylated at one site; it reads SIEDTS. Residues 129 to 347 are disordered; it reads SIEDTSQAQE…PGDMELTPSS (219 aa). Ser-144 carries O-linked (GalNAc...) serine glycosylation. Over residues 162–189 the composition is skewed to acidic residues; the sequence is EEEEEEEEEEEREKEEVEKQEEEEEEEL. The N-linked (GlcNAc...) asparagine glycan is linked to Asn-193. The span at 207-217 shows a compositional bias: polar residues; that stretch reads SLTSSSQTPGA. Composition is skewed to low complexity over residues 241–255 and 288–298; these read PSLLLPSVTPTTVTP and EATAGAAGLSG. An N-linked (GlcNAc...) asparagine glycan is attached at Asn-395. Residues 501–521 form a helical membrane-spanning segment; the sequence is LFVVLVVIGAICIIIIALGLL. The Cytoplasmic portion of the chain corresponds to 522–605; it reads YNCWQRRLPK…SDVFEEDTHL (84 aa). Residues 554 to 605 form a disordered region; that stretch reads LDVASDSQSEMQEKHPSLNGGGALNGPGSWGALMGGKRDPEDSDVFEEDTHL. A Phosphoserine modification is found at Ser-570. Positions 572 to 582 are enriched in gly residues; it reads NGGGALNGPGS. The span at 594 to 605 shows a compositional bias: acidic residues; it reads EDSDVFEEDTHL. Ser-596 is modified (phosphoserine).

Belongs to the podocalyxin family. As to quaternary structure, homodimer; disulfide-linked. Interacts with SELL, SELE and SELP. In terms of processing, O-glycosylated; contains chondroitin sulfate. Displays sialylated O-linked oligosaccharides. Post-translationally, sulfation is necessary for interaction with SELL. Sialylated O-linked oligosaccharides are necessary for interaction with SELL, SELE and SELP. Expressed in T-cells, B-cells and monocytes. Expression is higher on memory and germinal center cells than on naive B-cells (at protein level). Highly expressed in brain. Moderately expressed in pancreas, kidney and lymphoid node. Weakly expressed in liver. Detected in both endothelial cells and CD34+ bone marrow cells.

The protein resides in the membrane. Its function is as follows. Acts as a ligand for vascular selectins. Mediates rapid rolling of leukocytes over vascular surfaces through high affinity divalent cation-dependent interactions with E-, P- and L-selectins. This Homo sapiens (Human) protein is Podocalyxin-like protein 2 (PODXL2).